We begin with the raw amino-acid sequence, 603 residues long: uncharacterized protein (603 aa).

The region spanning 4-79 (YRIRVTTVDQ…VTFHLVIAVF (76 aa)) is the Ubiquitin-like domain. Disordered stretches follow at residues 85 to 121 (TLPS…PEEL), 159 to 178 (SLPT…NSVS), and 206 to 348 (AQES…NQPF). Polar residues-rich tracts occupy residues 94 to 117 (VPQS…TSLN) and 162 to 178 (THEQ…NSVS). The span at 219-231 (SSSSAPLASDQSP) shows a compositional bias: low complexity. Residues 246–264 (LGSNSGLNPRSPNSFSSPL) are compositionally biased toward polar residues. Positions 280–289 (SLSPLSNSSS) are enriched in low complexity. Residues 290-314 (INQVHQNETHGSTISVPNPNLSQMG) are compositionally biased toward polar residues. Low complexity predominate over residues 315-329 (PSHSSSVPSNLSPNP). A compositionally biased stretch (polar residues) spans 330 to 348 (AQNENPSTTSIPSINNQPF). Residues 496-516 (ILLTSIMSVVFLLQTGALAPF) form a helical membrane-spanning segment. Residues 544–578 (TAQRVVEIPNETQTEDEQDGTNTPDNRADAEEREL) are disordered. Threonine 566 carries the phosphothreonine modification. Over residues 569-578 (NRADAEEREL) the composition is skewed to basic and acidic residues.

It is found in the endoplasmic reticulum membrane. This is an uncharacterized protein from Schizosaccharomyces pombe (strain 972 / ATCC 24843) (Fission yeast).